The primary structure comprises 155 residues: Small ribosomal subunit protein uS7c (155 aa).

Belongs to the universal ribosomal protein uS7 family. In terms of assembly, part of the 30S ribosomal subunit.

It localises to the plastid. It is found in the chloroplast. In terms of biological role, one of the primary rRNA binding proteins, it binds directly to 16S rRNA where it nucleates assembly of the head domain of the 30S subunit. The polypeptide is Small ribosomal subunit protein uS7c (rps7) (Physcomitrium patens (Spreading-leaved earth moss)).